Here is a 632-residue protein sequence, read N- to C-terminus: DNA polymerase eta (632 aa).

Positions 26–309 constitute a UmuC domain; sequence IAHIDMNAFF…FEITSFWTLG (284 aa). 2 residues coordinate Mg(2+): Asp30 and Asp155. The UBZ3-type zinc finger occupies 545 to 580; it reads EKTPKLECCKYQVTFTDQKALQEHADYHLALKLSEG. The Zn(2+) site is built by Cys552, Cys553, His568, and His572. Residues 598 to 632 are disordered; sequence LLFSRKRPNSQHTATPQKKQVTSSKNILSFFTRKK. Over residues 607–626 the composition is skewed to polar residues; that stretch reads SQHTATPQKKQVTSSKNILS. The POL30-binding stretch occupies residues 625-632; sequence LSFFTRKK.

Belongs to the DNA polymerase type-Y family. Interacts with POL30. This interaction is essential for the polymerase eta function.

Its subcellular location is the nucleus. It carries out the reaction DNA(n) + a 2'-deoxyribonucleoside 5'-triphosphate = DNA(n+1) + diphosphate. DNA polymerase specifically involved in DNA repair. Plays an important role in translesion synthesis, where the normal high fidelity DNA polymerases cannot proceed and DNA synthesis stalls. Plays an important role in the repair of UV-induced pyrimidine dimers. Depending on the context, it inserts the correct base, but causes frequent base transitions and transversions. Efficiently incorporates nucleotides opposite to other UV or oxidative DNA damages like O(6)-methylguanine, 7,8-dihydro-8-oxoguanine, 2,6-diamino-4-hydroxy-5-formamidopyrimidine of 2'-deoxyguanosine (FaPydG), or p-benzoquinone DNA adducts. This is DNA polymerase eta (RAD30) from Saccharomyces cerevisiae (strain ATCC 204508 / S288c) (Baker's yeast).